The primary structure comprises 209 residues: tRNA(Phe) 7-((3-amino-3-carboxypropyl)-4-demethylwyosine(37)-N(4))-methyltransferase (209 aa).

The protein belongs to the TYW3 family.

The enzyme catalyses 4-demethyl-7-[(3S)-3-amino-3-carboxypropyl]wyosine(37) in tRNA(Phe) + S-adenosyl-L-methionine = 7-[(3S)-3-amino-3-carboxypropyl]wyosine(37) in tRNA(Phe) + S-adenosyl-L-homocysteine + H(+). Its function is as follows. S-adenosyl-L-methionine-dependent methyltransferase that acts as a component of the wyosine derivatives biosynthesis pathway. Probably methylates N-4 position of wybutosine-86 to produce wybutosine-72. The protein is tRNA(Phe) 7-((3-amino-3-carboxypropyl)-4-demethylwyosine(37)-N(4))-methyltransferase of Saccharolobus solfataricus (strain ATCC 35092 / DSM 1617 / JCM 11322 / P2) (Sulfolobus solfataricus).